The chain runs to 253 residues: Imidazole glycerol phosphate synthase subunit HisF (253 aa).

Residues D11 and D130 contribute to the active site.

Belongs to the HisA/HisF family. In terms of assembly, heterodimer of HisH and HisF.

The protein localises to the cytoplasm. It carries out the reaction 5-[(5-phospho-1-deoxy-D-ribulos-1-ylimino)methylamino]-1-(5-phospho-beta-D-ribosyl)imidazole-4-carboxamide + L-glutamine = D-erythro-1-(imidazol-4-yl)glycerol 3-phosphate + 5-amino-1-(5-phospho-beta-D-ribosyl)imidazole-4-carboxamide + L-glutamate + H(+). It functions in the pathway amino-acid biosynthesis; L-histidine biosynthesis; L-histidine from 5-phospho-alpha-D-ribose 1-diphosphate: step 5/9. In terms of biological role, IGPS catalyzes the conversion of PRFAR and glutamine to IGP, AICAR and glutamate. The HisF subunit catalyzes the cyclization activity that produces IGP and AICAR from PRFAR using the ammonia provided by the HisH subunit. This chain is Imidazole glycerol phosphate synthase subunit HisF, found in Geobacter sulfurreducens (strain ATCC 51573 / DSM 12127 / PCA).